We begin with the raw amino-acid sequence, 130 residues long: Small ribosomal subunit protein uS8x (130 aa).

It belongs to the universal ribosomal protein uS8 family.

The protein is Small ribosomal subunit protein uS8x (RPS15AD) of Arabidopsis thaliana (Mouse-ear cress).